The chain runs to 352 residues: UPF0324 membrane protein BCE_5279 (352 aa).

10 helical membrane-spanning segments follow: residues 25–47 (FGFSQGIGITLLIAIVAKYLAEL), 52–71 (IMGQLVIAILIGMVWRAAIG), 111–130 (VLVIAAVVITFTIFVVYGLT), 140–162 (GILTACGTAICGAAAVVAIAPQV), 169–191 (TAVGAAIIAILGTIFTLIYTLLY), 201–223 (YGVFSGATLHEIAHVIAAAAPGG), 230–252 (AVIVKLTRVAMLVPVAILIGLWF), 267–289 (LPIPWFIFGFLAMSAVHSLGIIP), 291–313 (VVAGYIVVIAYMLIAMAMAGLGL), and 328–350 (FVAGLIGSVCLSVLGYVLVYALG).

The protein belongs to the UPF0324 family.

It localises to the cell membrane. The sequence is that of UPF0324 membrane protein BCE_5279 from Bacillus cereus (strain ATCC 10987 / NRS 248).